A 158-amino-acid chain; its full sequence is MQGRSSAWLVKHELVHRSLGFDYQGIETLQIKPEDWYSIAVISYVYGYNYLRSQCAYDVAPGGLLASVYHLTRIQYGVDQPEEVCIKVFVPRSNPRIPSVFWIWKSADFQERESYDMLGISYDNHPRMKRILMPESWVGWPLRKDYIAPNFYELQDAH.

The protein belongs to the complex I 30 kDa subunit family. NDH is composed of at least 16 different subunits, 5 of which are encoded in the nucleus.

Its subcellular location is the plastid. The protein localises to the chloroplast thylakoid membrane. The enzyme catalyses a plastoquinone + NADH + (n+1) H(+)(in) = a plastoquinol + NAD(+) + n H(+)(out). It carries out the reaction a plastoquinone + NADPH + (n+1) H(+)(in) = a plastoquinol + NADP(+) + n H(+)(out). In terms of biological role, NDH shuttles electrons from NAD(P)H:plastoquinone, via FMN and iron-sulfur (Fe-S) centers, to quinones in the photosynthetic chain and possibly in a chloroplast respiratory chain. The immediate electron acceptor for the enzyme in this species is believed to be plastoquinone. Couples the redox reaction to proton translocation, and thus conserves the redox energy in a proton gradient. The sequence is that of NAD(P)H-quinone oxidoreductase subunit J, chloroplastic from Nuphar advena (Common spatterdock).